A 245-amino-acid chain; its full sequence is 8-amino-3,8-dideoxy-manno-octulosonate cytidylyltransferase (245 aa).

This sequence belongs to the KdsB family.

Its subcellular location is the cytoplasm. The enzyme catalyses 8-amino-3,8-dideoxy-alpha-D-manno-octulosonate + CTP = CMP-8-amino-3,8-dideoxy-alpha-D-manno-oct-2-ulosonate + diphosphate. It functions in the pathway bacterial outer membrane biogenesis; lipopolysaccharide biosynthesis. Activates KDO8N (a required 8-carbon sugar) for incorporation into bacterial lipopolysaccharide in the Shewanella genus. This chain is 8-amino-3,8-dideoxy-manno-octulosonate cytidylyltransferase, found in Shewanella sediminis (strain HAW-EB3).